Here is a 180-residue protein sequence, read N- to C-terminus: MKLRFISSALAAALFAATGSYAAVVDGGTIHFEGELVNAACSVNTDSADQVVTLGQYRTDIFNAVGNTSALIPFTIQLNDCDPVVAANAAVAFSGQADAINDNLLAIASSTNTTTATGVGIEILDNTSAILKPDGNSFSTNQNLIPGTNVLHFSARYKGTGTSASAGQANADATFIMRYE.

Residues 1-22 form the signal peptide; the sequence is MKLRFISSALAAALFAATGSYA. Cys-41 and Cys-81 are disulfide-bonded.

Belongs to the fimbrial protein family.

The protein resides in the fimbrium. This is an uncharacterized protein from Escherichia coli O157:H7.